The primary structure comprises 190 residues: MTGILAVQGAFAEHAAVLDKLGAPWKLLRAAEDFDESIDRVILPGGESTTQGKLLHSTGLFEPIAAHIKAGKPVFGTCAGMILLAKKLDNDDNVYFGALDAVVRRNAYGRQLGSFQATADFGAADDPQRITDFPLVFIRGPYVVSVGPEATVETEVDGHVVGLRQGNILATAFHPELTDDTRIHELFLSL.

An L-glutamine-binding site is contributed by 46 to 48 (GES). The Nucleophile role is filled by Cys-78. Residues Arg-105 and 138–139 (IR) each bind L-glutamine. Residues His-174 and Glu-176 each act as charge relay system in the active site.

The protein belongs to the glutaminase PdxT/SNO family. In the presence of PdxS, forms a dodecamer of heterodimers. Only shows activity in the heterodimer.

It carries out the reaction aldehydo-D-ribose 5-phosphate + D-glyceraldehyde 3-phosphate + L-glutamine = pyridoxal 5'-phosphate + L-glutamate + phosphate + 3 H2O + H(+). The enzyme catalyses L-glutamine + H2O = L-glutamate + NH4(+). The protein operates within cofactor biosynthesis; pyridoxal 5'-phosphate biosynthesis. In terms of biological role, catalyzes the hydrolysis of glutamine to glutamate and ammonia as part of the biosynthesis of pyridoxal 5'-phosphate. The resulting ammonia molecule is channeled to the active site of PdxS. This Bifidobacterium longum (strain NCC 2705) protein is Pyridoxal 5'-phosphate synthase subunit PdxT.